The sequence spans 148 residues: Large ribosomal subunit protein bL9 (148 aa).

As to quaternary structure, part of the 50S ribosomal subunit.

In terms of biological role, binds to the 23S rRNA. Extends more that 50 Angstroms beyond the surface of the 70S ribosome. The sequence is that of Large ribosomal subunit protein bL9 (rplI) from Thermus thermophilus (strain ATCC 27634 / DSM 579 / HB8).